Consider the following 139-residue polypeptide: Acyl carrier protein 5, chloroplastic (139 aa).

The transit peptide at 1–54 directs the protein to the chloroplast; that stretch reads MATSFCSSISMQAPFSATTTRFCLNKQATIFNNEKTNNLSFSLRRLMPARLAVS. One can recognise a Carrier domain in the interval 59-134; that stretch reads QETVEKVSEI…QAAELIEELV (76 aa). Residue S94 is modified to O-(pantetheine 4'-phosphoryl)serine.

This sequence belongs to the acyl carrier protein (ACP) family. 4'-phosphopantetheine is transferred from CoA to a specific serine of apo-ACP by acpS. This modification is essential for activity because fatty acids are bound in thioester linkage to the sulfhydryl of the prosthetic group.

It localises to the plastid. The protein localises to the chloroplast. Functionally, carrier of the growing fatty acid chain in fatty acid biosynthesis. This is Acyl carrier protein 5, chloroplastic (ACP5) from Arabidopsis thaliana (Mouse-ear cress).